The following is a 462-amino-acid chain: tRNA-2-methylthio-N(6)-dimethylallyladenosine synthase (462 aa).

Positions 28–144 constitute an MTTase N-terminal domain; the sequence is KKLFVKTYGC…LPKMMEAVNA (117 aa). The [4Fe-4S] cluster site is built by Cys-37, Cys-73, Cys-107, Cys-181, Cys-185, and Cys-188. Residues 167–398 form the Radical SAM core domain; it reads ATRGPTAFLT…QALLTQQQRA (232 aa). The TRAM domain occupies 401 to 462; the sequence is DAMVGRRVKV…KTNSLTGRLV (62 aa).

Belongs to the methylthiotransferase family. MiaB subfamily. Monomer. The cofactor is [4Fe-4S] cluster.

Its subcellular location is the cytoplasm. The catalysed reaction is N(6)-dimethylallyladenosine(37) in tRNA + (sulfur carrier)-SH + AH2 + 2 S-adenosyl-L-methionine = 2-methylsulfanyl-N(6)-dimethylallyladenosine(37) in tRNA + (sulfur carrier)-H + 5'-deoxyadenosine + L-methionine + A + S-adenosyl-L-homocysteine + 2 H(+). Catalyzes the methylthiolation of N6-(dimethylallyl)adenosine (i(6)A), leading to the formation of 2-methylthio-N6-(dimethylallyl)adenosine (ms(2)i(6)A) at position 37 in tRNAs that read codons beginning with uridine. This is tRNA-2-methylthio-N(6)-dimethylallyladenosine synthase from Jannaschia sp. (strain CCS1).